A 276-amino-acid chain; its full sequence is Protein MGF 360-15R (276 aa).

Belongs to the asfivirus MGF 360 family.

Plays a role in virus cell tropism, and may be required for efficient virus replication in macrophages. The sequence is that of Protein MGF 360-15R from African swine fever virus (isolate Tick/South Africa/Pretoriuskop Pr4/1996) (ASFV).